The sequence spans 529 residues: Autoinducer-2 kinase (529 aa).

The protein belongs to the FGGY kinase family.

It localises to the cytoplasm. It carries out the reaction (S)-4,5-dihydroxypentane-2,3-dione + ATP = (2S)-2-hydroxy-3,4-dioxopentyl phosphate + ADP + H(+). In terms of biological role, catalyzes the phosphorylation of autoinducer-2 (AI-2) to phospho-AI-2, which subsequently inactivates the transcriptional regulator LsrR and leads to the transcription of the lsr operon. Phosphorylates the ring-open form of (S)-4,5-dihydroxypentane-2,3-dione (DPD), which is the precursor to all AI-2 signaling molecules, at the C5 position. This Yersinia enterocolitica serotype O:8 / biotype 1B (strain NCTC 13174 / 8081) protein is Autoinducer-2 kinase.